The chain runs to 278 residues: NH(3)-dependent NAD(+) synthetase (278 aa).

43 to 50 provides a ligand contact to ATP; sequence GISGGVDS. Residue D49 participates in Mg(2+) binding. R146 contributes to the deamido-NAD(+) binding site. Position 166 (T166) interacts with ATP. E171 serves as a coordination point for Mg(2+). Residues K179 and D186 each contribute to the deamido-NAD(+) site. ATP-binding residues include K195 and T217. Deamido-NAD(+) is bound at residue 266 to 267; that stretch reads HK.

This sequence belongs to the NAD synthetase family. In terms of assembly, homodimer.

The catalysed reaction is deamido-NAD(+) + NH4(+) + ATP = AMP + diphosphate + NAD(+) + H(+). It functions in the pathway cofactor biosynthesis; NAD(+) biosynthesis; NAD(+) from deamido-NAD(+) (ammonia route): step 1/1. Functionally, catalyzes the ATP-dependent amidation of deamido-NAD to form NAD. Uses ammonia as a nitrogen source. In Pseudoalteromonas translucida (strain TAC 125), this protein is NH(3)-dependent NAD(+) synthetase.